The chain runs to 406 residues: Probable tRNA sulfurtransferase (406 aa).

The THUMP domain occupies 60–166; sequence DQVMNRLKLV…LNGIFLSSET (107 aa). ATP-binding positions include 184–185, 209–210, Arg266, Gly288, and Gln297; these read MM and HF.

Belongs to the ThiI family.

The protein resides in the cytoplasm. The enzyme catalyses [ThiI sulfur-carrier protein]-S-sulfanyl-L-cysteine + a uridine in tRNA + 2 reduced [2Fe-2S]-[ferredoxin] + ATP + H(+) = [ThiI sulfur-carrier protein]-L-cysteine + a 4-thiouridine in tRNA + 2 oxidized [2Fe-2S]-[ferredoxin] + AMP + diphosphate. It carries out the reaction [ThiS sulfur-carrier protein]-C-terminal Gly-Gly-AMP + S-sulfanyl-L-cysteinyl-[cysteine desulfurase] + AH2 = [ThiS sulfur-carrier protein]-C-terminal-Gly-aminoethanethioate + L-cysteinyl-[cysteine desulfurase] + A + AMP + 2 H(+). It participates in cofactor biosynthesis; thiamine diphosphate biosynthesis. In terms of biological role, catalyzes the ATP-dependent transfer of a sulfur to tRNA to produce 4-thiouridine in position 8 of tRNAs, which functions as a near-UV photosensor. Also catalyzes the transfer of sulfur to the sulfur carrier protein ThiS, forming ThiS-thiocarboxylate. This is a step in the synthesis of thiazole, in the thiamine biosynthesis pathway. The sulfur is donated as persulfide by IscS. In Limosilactobacillus reuteri subsp. reuteri (strain JCM 1112) (Lactobacillus reuteri), this protein is Probable tRNA sulfurtransferase.